We begin with the raw amino-acid sequence, 89 residues long: Small ribosomal subunit protein bS20 (89 aa).

Residues 1–25 (MANTPQSKKRARQLERRTAVNKARR) are disordered.

The protein belongs to the bacterial ribosomal protein bS20 family.

In terms of biological role, binds directly to 16S ribosomal RNA. This chain is Small ribosomal subunit protein bS20, found in Paracoccus denitrificans (strain Pd 1222).